Consider the following 419-residue polypeptide: Delta(8)-fatty-acid desaturase (419 aa).

Positions 1 to 64 (MKSKRQALSP…LKRMPKINPS (64 aa)) constitute a Cytochrome b5 heme-binding domain. The heme site is built by histidine 24 and histidine 47. Residues 110 to 130 (LGVLGYFLMVQYQMYFIGAVL) traverse the membrane as a helical segment. The Histidine box-1 signature appears at 143-147 (HDICH). The helical transmembrane segment at 156-176 (WNNLVGLVFGNGLQGFSVTCW) threads the bilayer. A Histidine box-2 motif is present at residues 180-184 (HNAHH). Helical transmembrane passes span 226-246 (YFLVICILLRFIWCFQCVLTV), 266-286 (IGLALHWTLKALFHLFFMPSI), and 290-310 (LLVFFVSELVGGFGIAIVVFM). Positions 355-359 (QIEHH) match the Histidine box-3 motif.

The protein belongs to the fatty acid desaturase type 1 family. Fe cation is required as a cofactor.

The protein localises to the membrane. The catalysed reaction is an (11Z,14Z)-icosadienoyl-containing glycerolipid + 2 Fe(II)-[cytochrome b5] + O2 + 2 H(+) = an (8Z,11Z,14Z)-icosatrienoyl-containing glycerolipid + 2 Fe(III)-[cytochrome b5] + 2 H2O. It catalyses the reaction an (11Z,14Z,17Z)-icosatrienoyl-containing glycerolipid + 2 Fe(II)-[cytochrome b5] + O2 + 2 H(+) = an (8Z,11Z,14Z,17Z)-eicosatetraenoyl-containing glycerolipid + 2 Fe(III)-[cytochrome b5] + 2 H2O. It carries out the reaction an (11Z)-eicosenoyl-containing glycerolipid + 2 Fe(II)-[cytochrome b5] + O2 + 2 H(+) = a (8Z,11Z)-eicosadienoyl-containing glycerolipid + 2 Fe(III)-[cytochrome b5] + 2 H2O. It functions in the pathway lipid metabolism; fatty acid metabolism. Its function is as follows. Delta(8)-fatty-acid desaturase which introduces a double bond at the 8-position in 20-carbon chain length fatty acids (C20) that have an existing delta-11 unsaturation (double bond). Whether it acts on CoA-linked substrates (as in animals) or phospholipid-linked substrates (as in plants and fungi) is still not clear. The chain is Delta(8)-fatty-acid desaturase (efd1) from Euglena gracilis.